A 382-amino-acid chain; its full sequence is Probable inactive dehydrogenase easA (382 aa).

Residues 25-27, alanine 60, glutamine 102, and histidine 171 each bind FMN; that span reads PMT. 2 residues coordinate substrate: histidine 171 and asparagine 174. FMN contacts are provided by residues lysine 223, glycine 299, 324-325, and arginine 325; that span reads GR. Tyrosine 352 lines the substrate pocket.

It belongs to the NADH:flavin oxidoreductase/NADH oxidase family.

Probable inactive dehydrogenase; part of the gene cluster that mediates the biosynthesis of fungal ergot alkaloid. DmaW catalyzes the first step of ergot alkaloid biosynthesis by condensing dimethylallyl diphosphate (DMAP) and tryptophan to form 4-dimethylallyl-L-tryptophan. The second step is catalyzed by the methyltransferase easF that methylates 4-dimethylallyl-L-tryptophan in the presence of S-adenosyl-L-methionine, resulting in the formation of 4-dimethylallyl-L-abrine. The catalase easC and the FAD-dependent oxidoreductase easE then transform 4-dimethylallyl-L-abrine to chanoclavine-I which is further oxidized by easD in the presence of NAD(+), resulting in the formation of chanoclavine-I aldehyde. Agroclavine dehydrogenase easG then mediates the conversion of chanoclavine-I aldehyde to agroclavine via a non-enzymatic adduct reaction: the substrate is an iminium intermediate that is formed spontaneously from chanoclavine-I aldehyde in the presence of glutathione. Further conversion of agroclavine to paspalic acid is a two-step process involving oxidation of agroclavine to elymoclavine and of elymoclavine to paspalic acid, the second step being performed by the elymoclavine oxidase cloA. However, cloA does not encode a functional enzyme indicating that C.fusiformis terminates its ergot alkaloid pathway at elymoclavine. This Claviceps fusiformis (Ergot fungus) protein is Probable inactive dehydrogenase easA.